Here is a 579-residue protein sequence, read N- to C-terminus: Rop guanine nucleotide exchange factor 6 (579 aa).

The span at 31–61 shows a compositional bias: low complexity; it reads ESTTDSSLSSSSSGVGSSSGRSSVAERSVSS. The disordered stretch occupies residues 31–89; sequence ESTTDSSLSSSSSGVGSSSGRSSVAERSVSSPPTKSQILGWPLGQGSWRKSSGKMKKKT. The PRONE domain maps to 98 to 479; sequence FKRVGTETSE…DISKDDGDGD (382 aa).

Functionally, guanine-nucleotide exchange factor (GEF) that acts as an activator of Rop (Rho of plants) GTPases by promoting the exchange of GDP for GTP. In Arabidopsis thaliana (Mouse-ear cress), this protein is Rop guanine nucleotide exchange factor 6 (ROPGEF6).